Here is a 271-residue protein sequence, read N- to C-terminus: Protein PXR1 (271 aa).

2 disordered regions span residues 1–26 (MGLA…NNTS) and 149–233 (KKRP…DSAA). Polar residues predominate over residues 17–26 (RNTTWSNNTS). The G-patch domain occupies 25–71 (TSRFGHKHLEKLGWKPGSGLGLVPDSTTSHIKVSIKDDNLGLGAKLK). Basic residues predominate over residues 165–205 (KKTKKVKKEKKVKKVKKEKKEKKEKKDKKEKKVKKEKKEKK). Basic and acidic residues predominate over residues 206–230 (EKKLKDKHSKDTNEITRDQMLKPRD).

It belongs to the PINX1 family.

The protein localises to the nucleus. It localises to the nucleolus. In terms of biological role, involved in rRNA-processing at A0, A1 and A2 sites and negatively regulates telomerase. This chain is Protein PXR1 (PXR1), found in Kluyveromyces lactis (strain ATCC 8585 / CBS 2359 / DSM 70799 / NBRC 1267 / NRRL Y-1140 / WM37) (Yeast).